The sequence spans 449 residues: Glucose-6-phosphate isomerase (449 aa).

Catalysis depends on Glu-291, which acts as the Proton donor. Active-site residues include His-312 and Lys-426.

It belongs to the GPI family.

It localises to the cytoplasm. The enzyme catalyses alpha-D-glucose 6-phosphate = beta-D-fructose 6-phosphate. The protein operates within carbohydrate biosynthesis; gluconeogenesis. Its pathway is carbohydrate degradation; glycolysis; D-glyceraldehyde 3-phosphate and glycerone phosphate from D-glucose: step 2/4. Catalyzes the reversible isomerization of glucose-6-phosphate to fructose-6-phosphate. The polypeptide is Glucose-6-phosphate isomerase (Streptococcus gordonii (strain Challis / ATCC 35105 / BCRC 15272 / CH1 / DL1 / V288)).